A 281-amino-acid polypeptide reads, in one-letter code: DegV domain-containing protein DR_1986 (281 aa).

In terms of domain architecture, DegV spans Ile3 to Pro278. Residues Thr61 and Ser93 each coordinate hexadecanoate.

In terms of biological role, may bind long-chain fatty acids, such as palmitate, and may play a role in lipid transport or fatty acid metabolism. The polypeptide is DegV domain-containing protein DR_1986 (Deinococcus radiodurans (strain ATCC 13939 / DSM 20539 / JCM 16871 / CCUG 27074 / LMG 4051 / NBRC 15346 / NCIMB 9279 / VKM B-1422 / R1)).